A 119-amino-acid chain; its full sequence is Ghilanten (119 aa).

The residue at position 1 (Gln1) is a Pyrrolidone carboxylic acid. 10 disulfide bridges follow: Cys8–Cys19, Cys13–Cys26, Cys28–Cys48, Cys33–Cys51, Cys37–Cys53, Cys62–Cys73, Cys67–Cys80, Cys82–Cys103, Cys88–Cys106, and Cys92–Cys108. An Antistasin-like 1 domain is found at 28-53 (CPEVRCRVYCSHGFQRSRYGCEVCRC). Residues 83–108 (KIDINCRKTCPNGLKRDKLGCEYCEC) enclose the Antistasin-like 2 domain. Heparin contacts are provided by residues 97–100 (KRDK) and 111–118 (KRKLVPRL).

It belongs to the protease inhibitor I15 (antistasin) family.

The protein localises to the secreted. This highly disulfide-bonded protein is a potent inhibitor of factor Xa. May have therapeutic utility as an anticoagulant. Also exhibits a strong metastatic activity. In Haementeria ghilianii (Amazon leech), this protein is Ghilanten.